A 495-amino-acid polypeptide reads, in one-letter code: Probable cytosol aminopeptidase (495 aa).

Residues Lys266 and Asp271 each coordinate Mn(2+). Residue Lys278 is part of the active site. Residues Asp289, Asp348, and Glu350 each contribute to the Mn(2+) site. Arg352 is a catalytic residue.

This sequence belongs to the peptidase M17 family. Requires Mn(2+) as cofactor.

It is found in the cytoplasm. It catalyses the reaction Release of an N-terminal amino acid, Xaa-|-Yaa-, in which Xaa is preferably Leu, but may be other amino acids including Pro although not Arg or Lys, and Yaa may be Pro. Amino acid amides and methyl esters are also readily hydrolyzed, but rates on arylamides are exceedingly low.. The catalysed reaction is Release of an N-terminal amino acid, preferentially leucine, but not glutamic or aspartic acids.. In terms of biological role, presumably involved in the processing and regular turnover of intracellular proteins. Catalyzes the removal of unsubstituted N-terminal amino acids from various peptides. The polypeptide is Probable cytosol aminopeptidase (Pseudomonas aeruginosa (strain LESB58)).